A 324-amino-acid polypeptide reads, in one-letter code: Putative ribose-phosphate pyrophosphokinase 1 (324 aa).

ATP contacts are provided by residues 43 to 45 (DGE) and 102 to 103 (RQ). Residue His-136 participates in Mg(2+) binding. D-ribose 5-phosphate contacts are provided by residues Asp-225 and 229–233 (NTGQT).

The protein belongs to the ribose-phosphate pyrophosphokinase family. Class I subfamily. In terms of assembly, homohexamer. It depends on Mg(2+) as a cofactor.

It localises to the cytoplasm. It catalyses the reaction D-ribose 5-phosphate + ATP = 5-phospho-alpha-D-ribose 1-diphosphate + AMP + H(+). It functions in the pathway metabolic intermediate biosynthesis; 5-phospho-alpha-D-ribose 1-diphosphate biosynthesis; 5-phospho-alpha-D-ribose 1-diphosphate from D-ribose 5-phosphate (route I): step 1/1. Its function is as follows. Involved in the biosynthesis of the central metabolite phospho-alpha-D-ribosyl-1-pyrophosphate (PRPP) via the transfer of pyrophosphoryl group from ATP to 1-hydroxyl of ribose-5-phosphate (Rib-5-P). The sequence is that of Putative ribose-phosphate pyrophosphokinase 1 from Enterococcus faecalis (strain ATCC 700802 / V583).